The sequence spans 463 residues: Argininosuccinate lyase (463 aa).

The protein belongs to the lyase 1 family. Argininosuccinate lyase subfamily.

It localises to the cytoplasm. The catalysed reaction is 2-(N(omega)-L-arginino)succinate = fumarate + L-arginine. It participates in amino-acid biosynthesis; L-arginine biosynthesis; L-arginine from L-ornithine and carbamoyl phosphate: step 3/3. In Staphylococcus epidermidis (strain ATCC 35984 / DSM 28319 / BCRC 17069 / CCUG 31568 / BM 3577 / RP62A), this protein is Argininosuccinate lyase.